The sequence spans 81 residues: ATP synthase subunit c (81 aa).

2 consecutive transmembrane segments (helical) span residues Ile-5 to Gly-25 and Val-57 to Ala-77.

It belongs to the ATPase C chain family. F-type ATPases have 2 components, F(1) - the catalytic core - and F(0) - the membrane proton channel. F(1) has five subunits: alpha(3), beta(3), gamma(1), delta(1), epsilon(1). F(0) has three main subunits: a(1), b(2) and c(10-14). The alpha and beta chains form an alternating ring which encloses part of the gamma chain. F(1) is attached to F(0) by a central stalk formed by the gamma and epsilon chains, while a peripheral stalk is formed by the delta and b chains.

It is found in the cell membrane. Its function is as follows. F(1)F(0) ATP synthase produces ATP from ADP in the presence of a proton or sodium gradient. F-type ATPases consist of two structural domains, F(1) containing the extramembraneous catalytic core and F(0) containing the membrane proton channel, linked together by a central stalk and a peripheral stalk. During catalysis, ATP synthesis in the catalytic domain of F(1) is coupled via a rotary mechanism of the central stalk subunits to proton translocation. In terms of biological role, key component of the F(0) channel; it plays a direct role in translocation across the membrane. A homomeric c-ring of between 10-14 subunits forms the central stalk rotor element with the F(1) delta and epsilon subunits. In Mycolicibacterium gilvum (strain PYR-GCK) (Mycobacterium gilvum (strain PYR-GCK)), this protein is ATP synthase subunit c.